The following is a 120-amino-acid chain: Phosphoribosyl-AMP cyclohydrolase (120 aa).

Aspartate 75 is a Mg(2+) binding site. Cysteine 76 lines the Zn(2+) pocket. 2 residues coordinate Mg(2+): aspartate 77 and aspartate 79. Residues cysteine 92 and cysteine 99 each contribute to the Zn(2+) site.

It belongs to the PRA-CH family. Homodimer. Mg(2+) is required as a cofactor. It depends on Zn(2+) as a cofactor.

The protein resides in the cytoplasm. It catalyses the reaction 1-(5-phospho-beta-D-ribosyl)-5'-AMP + H2O = 1-(5-phospho-beta-D-ribosyl)-5-[(5-phospho-beta-D-ribosylamino)methylideneamino]imidazole-4-carboxamide. The protein operates within amino-acid biosynthesis; L-histidine biosynthesis; L-histidine from 5-phospho-alpha-D-ribose 1-diphosphate: step 3/9. Catalyzes the hydrolysis of the adenine ring of phosphoribosyl-AMP. This Haloarcula marismortui (strain ATCC 43049 / DSM 3752 / JCM 8966 / VKM B-1809) (Halobacterium marismortui) protein is Phosphoribosyl-AMP cyclohydrolase.